The chain runs to 448 residues: Selenide, water dikinase 2 (448 aa).

Alanine 2 carries the N-acetylalanine modification. Serine 46 carries the phosphoserine modification. The active site involves selenocysteine 60. Position 60 (selenocysteine 60) is a non-standard amino acid, selenocysteine. An ATP-binding site is contributed by lysine 63. The segment at 85-107 (LGRGLVGGQEEASQEAGLPAGAG) is disordered. Serine 97 carries the post-translational modification Phosphoserine. ATP is bound by residues 118–120 (GMD), aspartate 138, aspartate 161, and 212–215 (GGQT). Aspartate 120 is a Mg(2+) binding site. Aspartate 161 serves as a coordination point for Mg(2+). Position 316 (aspartate 316) interacts with Mg(2+).

The protein belongs to the selenophosphate synthase 1 family. Class I subfamily. In terms of assembly, homodimer. Requires Mg(2+) as cofactor. In terms of processing, truncated SEPHS2 proteins produced by failed UGA/Sec decoding are ubiquitinated by the CRL2(KLHDC3) complex, which recognizes the glycine (Gly) at the C-terminus of truncated SEPHS2 proteins.

The enzyme catalyses hydrogenselenide + ATP + H2O = selenophosphate + AMP + phosphate + 2 H(+). In terms of biological role, synthesizes selenophosphate from selenide and ATP. The sequence is that of Selenide, water dikinase 2 (SEPHS2) from Homo sapiens (Human).